Consider the following 1256-residue polypeptide: Centrosome and spindle pole-associated protein 1 (1256 aa).

Coiled-coil stretches lie at residues 38–62 (ADNL…LESD) and 114–135 (EDYE…RRYL). Residues 189–208 (GKEESSEKFRQVEKSTEPKS) are compositionally biased toward basic and acidic residues. 2 disordered regions span residues 189–244 (GKEE…LTPS) and 381–403 (AENK…CSPF). Polar residues predominate over residues 222-232 (LTSQIQTSCEN). S244 bears the Phosphoserine mark. Positions 244 to 270 (SEAYEELLNQRRLEEDRYRQLDDEIEL) form a coiled coil. A coiled-coil region spans residues 417–449 (QRRKEKYRLELLEQMAEQQRNKRREKDLELRVA). Phosphoserine is present on residues S459 and S527. Residues 625-669 (SKQSLQSYQEALQQQIREREERRKKEREEKEEYEAKLEAEMRTYN) are a coiled coil. Disordered stretches follow at residues 735-757 (ANKS…VFGE) and 813-853 (EYEE…KKEE). Over residues 736-748 (NKSSGHMQTQSSP) the composition is skewed to polar residues. Phosphoserine occurs at positions 901 and 920. The interval 913–932 (SSMSRAQSPPVPARKNQLRA) is disordered. The stretch at 925–964 (ARKNQLRAEEEKKNVIMELSEMRKQLRSEERRLQERLLHM) forms a coiled coil. Phosphoserine is present on S966. Disordered regions lie at residues 1114-1147 (EDDV…RPNV) and 1232-1256 (LNQE…TAHG). The segment covering 1246–1256 (FTWQGLSTAHG) has biased composition (polar residues).

In terms of assembly, interacts with PLEKHG6. Interacts with ARMC9, TOGARAM1, CCDC66, CEP104 and CEP290. Phosphorylated. Phosphorylation increases in colcemide-treated cells. In terms of tissue distribution, expressed in adult and fetal brain with enrichment in the cerebellum. Detected in testis.

The protein localises to the cytoplasm. It is found in the cytoskeleton. It localises to the microtubule organizing center. Its subcellular location is the centrosome. The protein resides in the spindle. The protein localises to the spindle pole. It is found in the cell projection. It localises to the cilium. May play a role in cell-cycle-dependent microtubule organization. This chain is Centrosome and spindle pole-associated protein 1 (CSPP1), found in Homo sapiens (Human).